The primary structure comprises 922 residues: uncharacterized protein (922 aa).

5 disordered regions span residues 459–522 (SLQD…QPKN), 539–627 (SNSA…SSLG), 649–668 (GFSSSRTLGSSSNTQNRQPF), 692–835 (QKLD…VTSL), and 856–879 (PWRKPTVPEPVMSTPITEEQRPER). The segment covering 546-567 (KAKHSSNKPHKAASSRISKTKS) has biased composition (basic residues). A compositionally biased stretch (basic and acidic residues) spans 582-600 (KKSEESKQSGKKVKVEEKQ). Residues 651–660 (SSSRTLGSSS) are compositionally biased toward low complexity. The span at 692-702 (QKLDGSAEKEC) shows a compositional bias: basic and acidic residues. Composition is skewed to polar residues over residues 755–779 (DSTNSAQSNAVNPSRPAPTNTSLTG) and 790–824 (KATQPSSANPTQPTVPQSAASRPSAYKTSSCSSLQ). The stretch at 872–899 (TEEQRPEREAMKRKAQQERENAAKYTSL) forms a coiled coil.

This is an uncharacterized protein from Homo sapiens (Human).